Reading from the N-terminus, the 223-residue chain is Putative 3-methyladenine DNA glycosylase (223 aa).

The protein belongs to the DNA glycosylase MPG family.

In Pseudomonas savastanoi pv. phaseolicola (strain 1448A / Race 6) (Pseudomonas syringae pv. phaseolicola (strain 1448A / Race 6)), this protein is Putative 3-methyladenine DNA glycosylase.